The sequence spans 151 residues: Glycine and methionine-rich protein (151 aa).

Residues 1–19 (MKTAVVLAAFSALMALARA) form the signal peptide.

Component of the acid-insoluble and acid-soluble organic matrix of calcified layers of the shell (at protein level).

It localises to the secreted. The protein is Glycine and methionine-rich protein of Lottia gigantea (Giant owl limpet).